We begin with the raw amino-acid sequence, 390 residues long: NADH-quinone oxidoreductase subunit D (390 aa).

Belongs to the complex I 49 kDa subunit family. As to quaternary structure, NDH-1 is composed of 14 different subunits. Subunits NuoB, C, D, E, F, and G constitute the peripheral sector of the complex.

The protein resides in the cell inner membrane. It carries out the reaction a quinone + NADH + 5 H(+)(in) = a quinol + NAD(+) + 4 H(+)(out). In terms of biological role, NDH-1 shuttles electrons from NADH, via FMN and iron-sulfur (Fe-S) centers, to quinones in the respiratory chain. The immediate electron acceptor for the enzyme in this species is believed to be ubiquinone. Couples the redox reaction to proton translocation (for every two electrons transferred, four hydrogen ions are translocated across the cytoplasmic membrane), and thus conserves the redox energy in a proton gradient. In Geobacter sulfurreducens (strain ATCC 51573 / DSM 12127 / PCA), this protein is NADH-quinone oxidoreductase subunit D.